The chain runs to 128 residues: MATTGRPVKRVKRDISDGIAHISASFNNTIITITDRKGNALSWASAGASGFRGSRKSTPFAAQVAAEKAGAVAKEYGIKNLDVHVTGPGPGRESAVRSLNALGFKIVNVVDTTPLPHNGCRPPKKRRV.

Belongs to the universal ribosomal protein uS11 family. Part of the 30S ribosomal subunit. Interacts with proteins S7 and S18. Binds to IF-3.

Located on the platform of the 30S subunit, it bridges several disparate RNA helices of the 16S rRNA. Forms part of the Shine-Dalgarno cleft in the 70S ribosome. In Methylococcus capsulatus (strain ATCC 33009 / NCIMB 11132 / Bath), this protein is Small ribosomal subunit protein uS11.